A 449-amino-acid polypeptide reads, in one-letter code: Glucose-6-phosphate isomerase (449 aa).

The active-site Proton donor is glutamate 291. Residues histidine 312 and lysine 426 contribute to the active site.

Belongs to the GPI family.

The protein localises to the cytoplasm. The enzyme catalyses alpha-D-glucose 6-phosphate = beta-D-fructose 6-phosphate. The protein operates within carbohydrate biosynthesis; gluconeogenesis. Its pathway is carbohydrate degradation; glycolysis; D-glyceraldehyde 3-phosphate and glycerone phosphate from D-glucose: step 2/4. Catalyzes the reversible isomerization of glucose-6-phosphate to fructose-6-phosphate. This is Glucose-6-phosphate isomerase from Streptococcus pneumoniae (strain ATCC BAA-255 / R6).